Consider the following 79-residue polypeptide: Conotoxin Cal9.2a (79 aa).

The signal sequence occupies residues 1 to 23 (MNCYLILTVALLLTSAMTGTTTA). The propeptide occupies 24–33 (GQLNKKGVTL). 3 disulfides stabilise this stretch: Cys-41–Cys-58, Cys-46–Cys-68, and Cys-48–Cys-73.

In terms of tissue distribution, expressed by the venom duct.

The protein localises to the secreted. Probable neurotoxin with unknown target. Possibly targets ion channels. The sequence is that of Conotoxin Cal9.2a from Californiconus californicus (California cone).